Consider the following 179-residue polypeptide: Oryzines biosynthesis cluster protein J (179 aa).

Residues 88–148 (YVDYHPGCEP…NHCWRNPSKT (61 aa)) enclose the Cupin type-2 domain.

It belongs to the oryJ family.

Its pathway is secondary metabolite biosynthesis. Part of the gene cluster that mediates the biosynthesis of oryzines, natural products with an unusual maleidride backbone. The two subunits of the fungal fatty acid synthase oryfasA and oryfasB probably form octenoic acid. This fatty acid is most likely activated by the acyl-CoA ligase oryP to give octenyl-CoA before the citrate synthase-like protein oryE catalyzes condensation with oxaloacetate to form tricarboxylic acid. The next steps of the pathways are conjectural, but a favorite possible route has been proposed, beginning with decarboxylation and concomitant dehydration by the decarboxylase oryM, followed by tautomerization, which may lead to the production of a diene intermediate. Reduction of this diene intermediate could give the known metabolite piliformic acid. On the pathway to oryzine B and oryzine A, however, hydroxylation of the diene by the alpha-ketoglutarate-dependent dioxygenase oryG and lactonisation by the lactonohydrolases oryH or oryL could give oryzine B directly. Finally, enoyl reduction by the dehydrogenase oryD would then convert oryzine B into oryzine A. The sequence is that of Oryzines biosynthesis cluster protein J from Aspergillus oryzae (strain ATCC 42149 / RIB 40) (Yellow koji mold).